The chain runs to 112 residues: Beta-defensin 126 (112 aa).

The first 20 residues, Met-1–Gly-20, serve as a signal peptide directing secretion. The interval Asn-21–Asp-63 is in vitro binds to LPS, mediates antimicrobial activity and inhibits LPS-mediated inflammation. 3 disulfides stabilise this stretch: Cys-27–Cys-58, Cys-34–Cys-52, and Cys-38–Cys-59.

The protein belongs to the beta-defensin family. As to quaternary structure, homodimer or homooligomer; disulfide-linked. In terms of processing, O-glycosylated; glycans contain alpha(2,3)-linked sialic acids.

The protein localises to the secreted. Its function is as follows. Highly glycosylated atypical beta-defensin involved in several aspects of sperm function. Facilitates sperm transport in the female reproductive tract and contributes to sperm protection against immunodetection; both functions are probably implicating the negative surface charge provided by its O-linked oligosaccharides in the sperm glycocalyx. Involved in binding of sperm to oviductal epithelial cells to form a sperm reservoir until ovulation. Release from the sperm surface during capacitation and ovaluation by an elevation of oviductal fluid pH is unmasking other surface components and allows sperm to penetrate the cumulus matrix and bind to the zona pellucida of the oocyte. In vitro has antimicrobial activity and may inhibit LPS-mediated inflammation. This chain is Beta-defensin 126 (DEFB126), found in Hylobates lar (Lar gibbon).